Consider the following 376-residue polypeptide: Cell adhesion molecule CEACAM18 (376 aa).

An N-terminal signal peptide occupies residues 1-30; sequence MDFSRPSFSPWRWLTLVASLLTCGICQASG. Over 31–330 the chain is Extracellular; it reads QIFISPDSLL…PLPTVNRELY (300 aa). Residues N69, N95, and N110 are each glycosylated (N-linked (GlcNAc...) asparagine). Residues 229-314 enclose the Ig-like C2-type domain; the sequence is PDYVSLWTQP…TQLTFYRDVT (86 aa). C257 and C298 are oxidised to a cystine. The helical transmembrane segment at 331-351 threads the bilayer; it reads IPGPLVIFLILLTSLGGAFVC. At 352–376 the chain is on the cytoplasmic side; that stretch reads RVLVYSLFQSCSRGKTCHKCPWQTN.

It belongs to the immunoglobulin superfamily. CEA family. In terms of tissue distribution, mostly expressed in the small and large intestine and at lower levels also in other organs.

Its subcellular location is the membrane. This Mus musculus (Mouse) protein is Cell adhesion molecule CEACAM18.